Reading from the N-terminus, the 317-residue chain is Peroxidase 64 (317 aa).

Residues 1 to 22 (MNAHMLNLLVIVIFVVSFDVQA) form the signal peptide. 4 cysteine pairs are disulfide-bonded: cysteine 32–cysteine 111, cysteine 65–cysteine 70, cysteine 117–cysteine 313, and cysteine 195–cysteine 227. Histidine 63 functions as the Proton acceptor in the catalytic mechanism. Ca(2+)-binding residues include aspartate 64, valine 67, glycine 69, aspartate 71, and serine 73. Proline 158 contributes to the substrate binding site. An N-linked (GlcNAc...) asparagine glycan is attached at asparagine 163. A heme b-binding site is contributed by histidine 188. Threonine 189 serves as a coordination point for Ca(2+). Ca(2+) is bound by residues aspartate 241, threonine 243, and aspartate 248.

Belongs to the peroxidase family. Classical plant (class III) peroxidase subfamily. The cofactor is heme b. Requires Ca(2+) as cofactor. In terms of tissue distribution, expressed in the whole plant, but preferentially in roots.

It localises to the secreted. It carries out the reaction 2 a phenolic donor + H2O2 = 2 a phenolic radical donor + 2 H2O. In terms of biological role, removal of H(2)O(2), oxidation of toxic reductants, biosynthesis and degradation of lignin, suberization, auxin catabolism, response to environmental stresses such as wounding, pathogen attack and oxidative stress. These functions might be dependent on each isozyme/isoform in each plant tissue. The chain is Peroxidase 64 (PER64) from Arabidopsis thaliana (Mouse-ear cress).